The sequence spans 461 residues: Transforming growth factor beta-1-induced transcript 1 protein (461 aa).

Met1 bears the N-acetylmethionine mark. A disordered region spans residues 1–86 (MEDLDALLSD…PPFSSSSGVL (86 aa)). The tract at residues 1–200 (MEDLDALLSD…GCPSPPGQTN (200 aa)) is transcription activation. The interaction with PTK2B/PYK2 stretch occupies residues 1–240 (MEDLDALLSD…CNKPIAGQVV (240 aa)). An LD motif 1 motif is present at residues 3–15 (DLDALLSDLETTT). Thr33 is subject to Phosphothreonine. Position 38 is a phosphotyrosine (Tyr38). Residues 41 to 52 (QPQTGSGESSGA) are compositionally biased toward polar residues. Tyr60 carries the post-translational modification Phosphotyrosine; by FAK2 and FYN. Residue Ser68 is modified to Phosphoserine. The span at 69-83 (PKSVAPVAPPFSSSS) shows a compositional bias: low complexity. Residues 83–136 (SGVLGNGLCELDRLLQELNATQFNITDEIMSQFPSSKMAEGEGKEDQSEDKSIT) are interaction with PTK2/FAK1. Residues 92 to 104 (ELDRLLQELNATQ) carry the LD motif 2 motif. The segment at 116-154 (PSSKMAEGEGKEDQSEDKSITTVPSSTFPAPSKPSATSA) is disordered. Positions 121–134 (AEGEGKEDQSEDKS) are enriched in basic and acidic residues. Residues 135 to 154 (ITTVPSSTFPAPSKPSATSA) show a composition bias toward polar residues. Phosphoserine is present on residues Ser140, Ser141, Ser164, and Ser186. An LD motif 3 motif is present at residues 157–168 (ELDRLMASLSDF). The disordered stretch occupies residues 171–204 (QNHLPASGPPQPPAVSPTREGCPSPPGQTNKGSL). Phosphothreonine is present on Thr188. Ser194 is modified (phosphoserine). The LD motif 4 motif lies at 203–215 (SLDTMLGLLQSDL). LIM zinc-binding domains lie at 226–285 (GLCG…RFSP), 286–343 (RCGF…QLFA), 344–403 (PRCQ…QRGS), and 404–461 (LCAT…KLFG). Ser403 carries the post-translational modification Phosphoserine. Position 407 is a phosphothreonine (Thr407).

This sequence belongs to the paxillin family. Homooligomer. Interacts with PPARG. Interacts with TRAF4. Interacts with CRIP2. Interacts with HSPB1. Interacts with ILK. Interacts with LIMS1 and LIMS2. Interacts with NCK2. Interacts with NUDT16L1. Interacts with PAK. Interacts with PTPN12. Interacts with TCF3. Interacts with TCF7L2. Interacts with VCL. Interacts (via LD motif 3) with GIT1. Also interacts with GIT2. Forms a complex with ARHGEF7. Interacts with AR/androgen receptor in a ligand-dependent manner. Interacts with CSK. Interacts with PTK2/FAK1 and PTK2B/PYK2. Interacts with SLC6A3 and SLC6A4. Interacts with NR3C1. Interacts with SMAD3. Interacts with MAPK15. Interacts with SRC. Interacts with LYN. Interacts with talin. Interacts (via LIM zinc-binding domain 2) with CBLC (via RING-type zinc finger); the interaction is direct and enhances CBLC E3 ubiquitin-protein ligase activity. Interacts with PARVA. Interacts with PXN. Phosphorylated by gonadotropin-releasing hormone-activated SRC. Strongly expressed in large intestine, lung, spleen, testis, uterus and to a lower extent in brain, kidney and liver (at protein level). In brain, expressed by neuronal and non neuronal cells (at protein level).

It is found in the cell junction. The protein resides in the focal adhesion. The protein localises to the nucleus matrix. It localises to the cytoplasm. Its subcellular location is the cytoskeleton. Functions as a molecular adapter coordinating multiple protein-protein interactions at the focal adhesion complex and in the nucleus. Links various intracellular signaling modules to plasma membrane receptors and regulates the Wnt and TGFB signaling pathways. May also regulate SLC6A3 and SLC6A4 targeting to the plasma membrane hence regulating their activity. In the nucleus, functions as a nuclear receptor coactivator regulating glucocorticoid, androgen, mineralocorticoid and progesterone receptor transcriptional activity. May play a role in the processes of cell growth, proliferation, migration, differentiation and senescence. May have a zinc-dependent DNA-binding activity. This Rattus norvegicus (Rat) protein is Transforming growth factor beta-1-induced transcript 1 protein (Tgfb1i1).